Consider the following 572-residue polypeptide: Urease subunit alpha (572 aa).

The 439-residue stretch at 134-572 folds into the Urease domain; the sequence is AGIDSHIHLI…ASMNQRYFFG (439 aa). Ni(2+) contacts are provided by His-139, His-141, and Lys-222. Residue Lys-222 is modified to N6-carboxylysine. His-224 is a binding site for substrate. Positions 251 and 277 each coordinate Ni(2+). The active-site Proton donor is His-325. Asp-365 contributes to the Ni(2+) binding site.

This sequence belongs to the metallo-dependent hydrolases superfamily. Urease alpha subunit family. As to quaternary structure, heterotrimer of UreA (gamma), UreB (beta) and UreC (alpha) subunits. Three heterotrimers associate to form the active enzyme. Ni cation serves as cofactor. Post-translationally, carboxylation allows a single lysine to coordinate two nickel ions.

Its subcellular location is the cytoplasm. It carries out the reaction urea + 2 H2O + H(+) = hydrogencarbonate + 2 NH4(+). Its pathway is nitrogen metabolism; urea degradation; CO(2) and NH(3) from urea (urease route): step 1/1. In Yersinia pseudotuberculosis serotype O:1b (strain IP 31758), this protein is Urease subunit alpha.